The sequence spans 291 residues: Glycine--tRNA ligase alpha subunit (291 aa).

It belongs to the class-II aminoacyl-tRNA synthetase family. In terms of assembly, tetramer of two alpha and two beta subunits.

It localises to the cytoplasm. The enzyme catalyses tRNA(Gly) + glycine + ATP = glycyl-tRNA(Gly) + AMP + diphosphate. The sequence is that of Glycine--tRNA ligase alpha subunit from Rhizorhabdus wittichii (strain DSM 6014 / CCUG 31198 / JCM 15750 / NBRC 105917 / EY 4224 / RW1) (Sphingomonas wittichii).